The primary structure comprises 480 residues: Probable cytosol aminopeptidase (480 aa).

Positions 248 and 253 each coordinate Mn(2+). Residue Lys260 is part of the active site. Asp271, Asp330, and Glu332 together coordinate Mn(2+). Residue Arg334 is part of the active site.

Belongs to the peptidase M17 family. Mn(2+) serves as cofactor.

The protein localises to the cytoplasm. The catalysed reaction is Release of an N-terminal amino acid, Xaa-|-Yaa-, in which Xaa is preferably Leu, but may be other amino acids including Pro although not Arg or Lys, and Yaa may be Pro. Amino acid amides and methyl esters are also readily hydrolyzed, but rates on arylamides are exceedingly low.. It catalyses the reaction Release of an N-terminal amino acid, preferentially leucine, but not glutamic or aspartic acids.. Presumably involved in the processing and regular turnover of intracellular proteins. Catalyzes the removal of unsubstituted N-terminal amino acids from various peptides. The sequence is that of Probable cytosol aminopeptidase from Solibacter usitatus (strain Ellin6076).